We begin with the raw amino-acid sequence, 410 residues long: Peptidase T (410 aa).

Histidine 78 provides a ligand contact to Zn(2+). Aspartate 80 is an active-site residue. A Zn(2+)-binding site is contributed by aspartate 139. Residue glutamate 173 is the Proton acceptor of the active site. Positions 174, 196, and 378 each coordinate Zn(2+).

Belongs to the peptidase M20B family. It depends on Zn(2+) as a cofactor.

It is found in the cytoplasm. The catalysed reaction is Release of the N-terminal residue from a tripeptide.. Its function is as follows. Cleaves the N-terminal amino acid of tripeptides. The protein is Peptidase T of Shewanella woodyi (strain ATCC 51908 / MS32).